Here is a 2327-residue protein sequence, read N- to C-terminus: Nonribosomal peptide synthetase apmB (2327 aa).

Residues 214–605 (DTQAKSRPDS…GRKDMQIKLR (392 aa)) form an adenylation 1 region. The region spanning 734–810 (EPATATGKVL…EMADACTKVI (77 aa)) is the Carrier 1 domain. An O-(pantetheine 4'-phosphoryl)serine modification is found at Ser771. Residues 845–1259 (EDLYPCTAMQ…IFISSKDQES (415 aa)) are condensation 1. The tract at residues 1281–1675 (ERIAERPDHE…RRKDTQVKLR (395 aa)) is adenylation 2. The Carrier 2 domain occupies 1816–1892 (PPTTDMQITM…AISAVAETLS (77 aa)). Ser1853 is subject to O-(pantetheine 4'-phosphoryl)serine. The condensation 2 stretch occupies residues 1937 to 2260 (TDFQSLAING…VFQYQDFGGE (324 aa)). The interval 2299-2327 (RVDLPRRPSPAGDTRDGPTAASDSPSRAR) is disordered.

It belongs to the NRP synthetase family.

The catalysed reaction is N-benzoyl-L-phenylalaninol + benzoate + L-phenylalanine + 2 ATP = asperphenamate + 2 AMP + 2 diphosphate + H(+). Its pathway is secondary metabolite biosynthesis. In terms of biological role, nonribosomal peptide synthetase; part of the gene cluster that mediates the biosynthesis of asperphenamate, a rare linear amino acid ester that exhibits antitumor activity towards a number of cell lines. The structure of asperphenamate contains two subunits, N-benzoylphenylalanine and N-benzoylphenylalaninol, which are connected by an inter-molecular ester bond. The first step of asperphenamate biosynthesis is the generation of N-benzoylphenylalaninol by the nonribosomal peptide synthase apmA. Using phenylalanine and benzoic acid as substrates, apmA catalyzes amide bond formation and tethers the intermediate into the NRPS chain. Then, the terminal R domain of apmA catalyzes the reduction reaction to get the shunt product N-benzoylphenylalaninol. Subsequently, the nonribosomal peptide synthase apmB activates the same substrates as does apmA (phenylalanine and benzoic acid) to produce N-benzoylphenylalanine before condensing N-benzoylphenylalanine and N-benzoylphenylalaninol to release asperphenamate. This is Nonribosomal peptide synthetase apmB from Penicillium brevicompactum.